The primary structure comprises 754 residues: 5-methyltetrahydropteroyltriglutamate--homocysteine methyltransferase (754 aa).

5-methyltetrahydropteroyltri-L-glutamate-binding positions include Arg-17–Lys-20 and Lys-117. L-homocysteine-binding positions include Ile-431–Ser-433 and Glu-484. Residues Ile-431–Ser-433 and Glu-484 contribute to the L-methionine site. Residues Arg-515 to Cys-516 and Trp-561 contribute to the 5-methyltetrahydropteroyltri-L-glutamate site. Asp-599 is an L-homocysteine binding site. Asp-599 contributes to the L-methionine binding site. 5-methyltetrahydropteroyltri-L-glutamate is bound at residue Glu-605. 3 residues coordinate Zn(2+): His-641, Cys-643, and Glu-665. His-694 functions as the Proton donor in the catalytic mechanism. Cys-726 contributes to the Zn(2+) binding site.

This sequence belongs to the vitamin-B12 independent methionine synthase family. Zn(2+) is required as a cofactor.

The catalysed reaction is 5-methyltetrahydropteroyltri-L-glutamate + L-homocysteine = tetrahydropteroyltri-L-glutamate + L-methionine. It functions in the pathway amino-acid biosynthesis; L-methionine biosynthesis via de novo pathway; L-methionine from L-homocysteine (MetE route): step 1/1. Its function is as follows. Catalyzes the transfer of a methyl group from 5-methyltetrahydrofolate to homocysteine resulting in methionine formation. The protein is 5-methyltetrahydropteroyltriglutamate--homocysteine methyltransferase of Salmonella agona (strain SL483).